A 233-amino-acid polypeptide reads, in one-letter code: Phosphoribosylformylglycinamidine synthase subunit PurQ (233 aa).

A Glutamine amidotransferase type-1 domain is found at 3 to 233 (SAVLVFPGIN…GLVAHLERAA (231 aa)). C87 (nucleophile) is an active-site residue. Catalysis depends on residues H204 and E206.

In terms of assembly, part of the FGAM synthase complex composed of 1 PurL, 1 PurQ and 2 PurS subunits.

Its subcellular location is the cytoplasm. It carries out the reaction N(2)-formyl-N(1)-(5-phospho-beta-D-ribosyl)glycinamide + L-glutamine + ATP + H2O = 2-formamido-N(1)-(5-O-phospho-beta-D-ribosyl)acetamidine + L-glutamate + ADP + phosphate + H(+). It catalyses the reaction L-glutamine + H2O = L-glutamate + NH4(+). Its pathway is purine metabolism; IMP biosynthesis via de novo pathway; 5-amino-1-(5-phospho-D-ribosyl)imidazole from N(2)-formyl-N(1)-(5-phospho-D-ribosyl)glycinamide: step 1/2. Its function is as follows. Part of the phosphoribosylformylglycinamidine synthase complex involved in the purines biosynthetic pathway. Catalyzes the ATP-dependent conversion of formylglycinamide ribonucleotide (FGAR) and glutamine to yield formylglycinamidine ribonucleotide (FGAM) and glutamate. The FGAM synthase complex is composed of three subunits. PurQ produces an ammonia molecule by converting glutamine to glutamate. PurL transfers the ammonia molecule to FGAR to form FGAM in an ATP-dependent manner. PurS interacts with PurQ and PurL and is thought to assist in the transfer of the ammonia molecule from PurQ to PurL. The chain is Phosphoribosylformylglycinamidine synthase subunit PurQ from Nitrobacter winogradskyi (strain ATCC 25391 / DSM 10237 / CIP 104748 / NCIMB 11846 / Nb-255).